The following is a 636-amino-acid chain: Sodium-dependent proline transporter (636 aa).

Topologically, residues 1–45 (MKKLQGAHLRKPVTPDLLMTPSDQGDVDLDVDFAAHRGNWTGKLD) are cytoplasmic. T20 is subject to Phosphothreonine. The residue at position 22 (S22) is a Phosphoserine. A run of 3 helical transmembrane segments spans residues 46–66 (FLLS…FPYR), 74–93 (AFLV…LFFL), and 117–137 (GAGA…NMII). Residues 138–214 (AYVLFYLFAS…QGIGSPGEIR (77 aa)) are Extracellular-facing. A glycan (N-linked (GlcNAc...) asparagine) is linked at N182. Helical transmembrane passes span 215 to 233 (WNLC…LCIL), 242 to 259 (VVYF…MLLV), 295 to 312 (IFYS…FASY), 324 to 345 (FIVT…FSVL), 378 to 397 (LPLS…TLGL), 425 to 443 (VFSG…ILTT), 459 to 479 (SFGL…VYGI), 500 to 519 (ACWL…YSIV), and 538 to 556 (LGIL…GMLV). Residues 557-636 (AVLREEGSLW…EIAEEEESMM (80 aa)) are Cytoplasmic-facing. Phosphoserine is present on residues S573 and S582. T588 is subject to Phosphothreonine. Residue Y591 is modified to Phosphotyrosine. Phosphoserine occurs at positions 598 and 600.

It belongs to the sodium:neurotransmitter symporter (SNF) (TC 2.A.22) family. SLC6A7 subfamily. Brain specific (at protein level). Highly expressed in hippocampus, corpus striatum and temporal cortex. Also expressed in frontal cortex, occipital cortex and, at lower levels, in cerebellum and parietal cortex (at protein level).

It is found in the synaptic cell membrane. It catalyses the reaction L-proline(out) + chloride(out) + 2 Na(+)(out) = L-proline(in) + chloride(in) + 2 Na(+)(in). It carries out the reaction L-pipecolate(out) + chloride(out) + 2 Na(+)(out) = L-pipecolate(in) + chloride(in) + 2 Na(+)(in). Brain specific sodium (and chloride)-dependent proline transporter. Terminates the action of proline by its high affinity sodium-dependent reuptake into presynaptic terminals. This Homo sapiens (Human) protein is Sodium-dependent proline transporter.